We begin with the raw amino-acid sequence, 166 residues long: MSEAIIAKKAEQVELIAEKMKAAASIVVVDSRGLTVEQDTNLRRSLRESDVEFKVIKNSILTRAAEKAGLEDLKELFVGPSAVAFSNEDVIAPAKVISDFAKDAEALEIKGGSVDGKFTSVEEINALAKLPNKEGMLSMLLSVLQAPVRNVAYAVKAVAEKDEEVA.

The protein belongs to the universal ribosomal protein uL10 family. As to quaternary structure, part of the ribosomal stalk of the 50S ribosomal subunit. The N-terminus interacts with L11 and the large rRNA to form the base of the stalk. The C-terminus forms an elongated spine to which L12 dimers bind in a sequential fashion forming a multimeric L10(L12)X complex.

Functionally, forms part of the ribosomal stalk, playing a central role in the interaction of the ribosome with GTP-bound translation factors. The chain is Large ribosomal subunit protein uL10 from Streptococcus agalactiae serotype V (strain ATCC BAA-611 / 2603 V/R).